The sequence spans 609 residues: Frizzled and smoothened-like protein E (609 aa).

An N-terminal signal peptide occupies residues 1-20; sequence MEMIRIFLIYLILKIIIING. The Extracellular segment spans residues 21-259; the sequence is ENNEYSKGYG…QWKRVYDMAK (239 aa). In terms of domain architecture, FZ spans 35–192; the sequence is FPGSKCLNYV…GLYKVPCIDP (158 aa). 4 disulfide bridges follow: cysteine 40-cysteine 118, cysteine 53-cysteine 111, cysteine 100-cysteine 149, and cysteine 138-cysteine 189. Asparagine 75, asparagine 130, asparagine 172, asparagine 198, asparagine 217, and asparagine 245 each carry an N-linked (GlcNAc...) asparagine glycan. A helical transmembrane segment spans residues 260–280; it reads TLSSISFICACYNILTFGILN. Residues 281-288 are Cytoplasmic-facing; the sequence is RKRKSKYN. A helical membrane pass occupies residues 289–309; it reads ICITLMSTSIALVYLTDIIKF. The Extracellular segment spans residues 310–337; the sequence is GYGIEEFLCPEPGRSAVQNDAACGITGA. A helical membrane pass occupies residues 338–358; the sequence is MFHFGITYCCCWAMTMSIVLF. Over 359 to 365 the chain is Cytoplasmic; that stretch reads CSVKRIK. A helical transmembrane segment spans residues 366 to 386; sequence LFYFRHFMIGNTIFTIITTVI. At 387 to 408 the chain is on the extracellular side; the sequence is LLSAKKMVAGTGYIECWVRERW. Residues 409–429 form a helical membrane-spanning segment; it reads FVITLFWLPCGIGLSIGIFCI. Residues 430 to 457 are Cytoplasmic-facing; that stretch reads GGVIHEIYNISKKVNIRESEFILRQIKP. A helical membrane pass occupies residues 458–478; the sequence is FSLVFSVAGSFLYLFIFFFDV. Topologically, residues 479–511 are extracellular; the sequence is ERKIDSYKAAVADYVLCLLSGGSEETCFTTGPN. The chain crosses the membrane as a helical span at residues 512-532; sequence YASFFIFYFFIRVFGVLFFSI. The Cytoplasmic segment spans residues 533 to 609; that stretch reads YGTSRVARDI…DSKSIELEKK (77 aa). Positions 559 to 570 are enriched in polar residues; the sequence is ESGISRNNSRTD. The disordered stretch occupies residues 559–609; that stretch reads ESGISRNNSRTDISFGKNNNSKNSNNSKNSNNSKNSNNSDNDSKSIELEKK. Residues 575–598 are compositionally biased toward low complexity; sequence KNNNSKNSNNSKNSNNSKNSNNSD. Residues 599–609 are compositionally biased toward basic and acidic residues; the sequence is NDSKSIELEKK.

Belongs to the G-protein coupled receptor Fz/Smo family.

The protein resides in the membrane. In Dictyostelium discoideum (Social amoeba), this protein is Frizzled and smoothened-like protein E (fslE).